Here is a 327-residue protein sequence, read N- to C-terminus: Biotin synthase (327 aa).

The region spanning 52 to 279 is the Radical SAM core domain; the sequence is NAIQRSTLLS…TSWVRLSAGR (228 aa). Residues Cys-67, Cys-71, and Cys-74 each coordinate [4Fe-4S] cluster. [2Fe-2S] cluster contacts are provided by Cys-111, Cys-142, Cys-202, and Arg-274.

This sequence belongs to the radical SAM superfamily. Biotin synthase family. Homodimer. Requires [4Fe-4S] cluster as cofactor. It depends on [2Fe-2S] cluster as a cofactor.

The catalysed reaction is (4R,5S)-dethiobiotin + (sulfur carrier)-SH + 2 reduced [2Fe-2S]-[ferredoxin] + 2 S-adenosyl-L-methionine = (sulfur carrier)-H + biotin + 2 5'-deoxyadenosine + 2 L-methionine + 2 oxidized [2Fe-2S]-[ferredoxin]. Its pathway is cofactor biosynthesis; biotin biosynthesis; biotin from 7,8-diaminononanoate: step 2/2. In terms of biological role, catalyzes the conversion of dethiobiotin (DTB) to biotin by the insertion of a sulfur atom into dethiobiotin via a radical-based mechanism. This Dechloromonas aromatica (strain RCB) protein is Biotin synthase.